The following is a 203-amino-acid chain: GTP-binding protein YPTM2 (203 aa).

GTP is bound by residues 15 to 23, 33 to 40, 63 to 67, 121 to 124, and 151 to 153; these read GDSGVGKSC, YLDSYIST, DTAGQ, NKSD, and SAK. An Effector region motif is present at residues 37 to 45; it reads YISTIGVDF. 2 S-geranylgeranyl cysteine lipidation sites follow: cysteine 200 and cysteine 201.

The protein belongs to the small GTPase superfamily. Rab family. Its expression is weak in stems, higher in roots, leaves and coleoptiles, but highest in flowers.

Its subcellular location is the cell membrane. Functionally, protein transport. Probably involved in vesicular traffic. This chain is GTP-binding protein YPTM2 (YPTM2), found in Zea mays (Maize).